Reading from the N-terminus, the 160-residue chain is Putative pre-16S rRNA nuclease (160 aa).

The protein belongs to the YqgF nuclease family.

The protein localises to the cytoplasm. In terms of biological role, could be a nuclease involved in processing of the 5'-end of pre-16S rRNA. In Rhodopseudomonas palustris (strain BisB5), this protein is Putative pre-16S rRNA nuclease.